A 241-amino-acid chain; its full sequence is Probable transcriptional regulatory protein stu0195 (241 aa).

This sequence belongs to the TACO1 family. YeeN subfamily.

It localises to the cytoplasm. This chain is Probable transcriptional regulatory protein stu0195, found in Streptococcus thermophilus (strain ATCC BAA-250 / LMG 18311).